The chain runs to 300 residues: MTAVVLDGVATASAVKSELAVRIRALREQGLVPGLGTLLVGDDPGSRSYVAGKHRDCAEVGIESIRVDLPADATEADVRTAIERLNSDPAVTGYIVQLPLPAGIDENAMLELIDPSKDADGLHPTNLGRLVLGVQGELTSPLPCTPAGIVEMLQRYDVPIAGQHVVVVGRGLTVGRPLGLLLTRKGLDATVTLTHSRTRDIEQEVRRADIVVAAVGAAHLVKPEWVKPGAAVLDVGITRVVDPETGKARLTGDVDPAVAEVAGHLSPNPRGVGPMTRAMLLANVVQAAERDARLAAELRG.

Residues 169 to 171 (GRG), Ser-196, and Ile-237 each bind NADP(+).

Belongs to the tetrahydrofolate dehydrogenase/cyclohydrolase family. As to quaternary structure, homodimer.

The catalysed reaction is (6R)-5,10-methylene-5,6,7,8-tetrahydrofolate + NADP(+) = (6R)-5,10-methenyltetrahydrofolate + NADPH. It catalyses the reaction (6R)-5,10-methenyltetrahydrofolate + H2O = (6R)-10-formyltetrahydrofolate + H(+). The protein operates within one-carbon metabolism; tetrahydrofolate interconversion. Catalyzes the oxidation of 5,10-methylenetetrahydrofolate to 5,10-methenyltetrahydrofolate and then the hydrolysis of 5,10-methenyltetrahydrofolate to 10-formyltetrahydrofolate. This Clavibacter sepedonicus (Clavibacter michiganensis subsp. sepedonicus) protein is Bifunctional protein FolD.